Reading from the N-terminus, the 388-residue chain is Chaperone protein DnaJ (388 aa).

Residues 6–71 (DYYEILGVPR…EKRKLYDQFG (66 aa)) enclose the J domain. The CR-type zinc finger occupies 147–229 (GCEKEIPIYR…CGGTGNVRRQ (83 aa)). Zn(2+)-binding residues include Cys160, Cys163, Cys177, Cys180, Cys203, Cys206, Cys217, and Cys220. CXXCXGXG motif repeat units follow at residues 160-167 (CSVCGGSG), 177-184 (CQKCGGTG), 203-210 (CDACGGTG), and 217-224 (CRECGGTG).

It belongs to the DnaJ family. In terms of assembly, homodimer. Requires Zn(2+) as cofactor.

The protein localises to the cytoplasm. Its function is as follows. Participates actively in the response to hyperosmotic and heat shock by preventing the aggregation of stress-denatured proteins and by disaggregating proteins, also in an autonomous, DnaK-independent fashion. Unfolded proteins bind initially to DnaJ; upon interaction with the DnaJ-bound protein, DnaK hydrolyzes its bound ATP, resulting in the formation of a stable complex. GrpE releases ADP from DnaK; ATP binding to DnaK triggers the release of the substrate protein, thus completing the reaction cycle. Several rounds of ATP-dependent interactions between DnaJ, DnaK and GrpE are required for fully efficient folding. Also involved, together with DnaK and GrpE, in the DNA replication of plasmids through activation of initiation proteins. The polypeptide is Chaperone protein DnaJ (Caldicellulosiruptor bescii (strain ATCC BAA-1888 / DSM 6725 / KCTC 15123 / Z-1320) (Anaerocellum thermophilum)).